Consider the following 837-residue polypeptide: Periplasmic nitrate reductase (837 aa).

A signal peptide (tat-type signal) is located at residues 1-33; that stretch reads MTTPKLDRRQVLKLEAAAMAALAGGIAMPAAAA. A 4Fe-4S Mo/W bis-MGD-type domain is found at 44-100; it reads LKWDKAACRFCGTGCSVMVATKENRVVATHGDTKSEVNRGLNCVKGYFLSKIMYGHD. C51, C54, C58, and C86 together coordinate [4Fe-4S] cluster. Mo-bis(molybdopterin guanine dinucleotide) is bound by residues K88, Q155, N180, C184, 217–224, 248–252, 267–269, M378, Q382, N488, 514–515, K537, D564, and 724–733; these read WGSNMAEM, STFEH, QTD, SD, and TGRVLEHWHS. W800 contacts substrate. Mo-bis(molybdopterin guanine dinucleotide) contacts are provided by N808 and K825.

This sequence belongs to the prokaryotic molybdopterin-containing oxidoreductase family. NasA/NapA/NarB subfamily. Component of the periplasmic nitrate reductase NapAB complex composed of NapA and NapB. It depends on [4Fe-4S] cluster as a cofactor. Mo-bis(molybdopterin guanine dinucleotide) is required as a cofactor. Post-translationally, predicted to be exported by the Tat system. The position of the signal peptide cleavage has not been experimentally proven.

Its subcellular location is the periplasm. It catalyses the reaction 2 Fe(II)-[cytochrome] + nitrate + 2 H(+) = 2 Fe(III)-[cytochrome] + nitrite + H2O. Catalytic subunit of the periplasmic nitrate reductase complex NapAB. Receives electrons from NapB and catalyzes the reduction of nitrate to nitrite. In Rhodopseudomonas palustris (strain BisB18), this protein is Periplasmic nitrate reductase.